The following is a 209-amino-acid chain: Large ribosomal subunit protein uL3 (209 aa).

The segment at 127–166 is disordered; sequence NFGGGQRTHGQSDRLRAPGSIGGASDPSKTFKGTKMGGRM.

The protein belongs to the universal ribosomal protein uL3 family. As to quaternary structure, part of the 50S ribosomal subunit. Forms a cluster with proteins L14 and L19.

In terms of biological role, one of the primary rRNA binding proteins, it binds directly near the 3'-end of the 23S rRNA, where it nucleates assembly of the 50S subunit. The protein is Large ribosomal subunit protein uL3 of Chlorobium phaeovibrioides (strain DSM 265 / 1930) (Prosthecochloris vibrioformis (strain DSM 265)).